Here is a 394-residue protein sequence, read N- to C-terminus: THAP domain-containing protein 5 (394 aa).

Residues 1–84 (MPRYCAAICC…LKQTAIPTIF (84 aa)) form a THAP-type zinc finger. The tract at residues 86 to 109 (LPEDNQEKDPSKKKSQKKKLKSEK) is disordered. Residues 320-323 (EHSY) carry the HCFC1-binding motif (HBM) motif. Residues 347 to 381 (LELQEQQTLGRLKSLEALIRQLKQENWLSEENVKI) adopt a coiled-coil conformation.

As to quaternary structure, interacts with HTRA2; under apoptotic conditions. Interacts with ABRAXAS2. Post-translationally, cleaved by HTRA2 during apoptosis.

It is found in the nucleus. In terms of biological role, has sequence-specific DNA-binding activity and can function as transcriptional repressor (in vitro). May be a regulator of cell cycle: THAP5 overexpression in human cell lines causes cell cycle arrest at G2/M phase. This Bos taurus (Bovine) protein is THAP domain-containing protein 5 (THAP5).